We begin with the raw amino-acid sequence, 141 residues long: Vasotocin-neurophysin VT (141 aa).

Residues Cys1 and Cys6 are joined by a disulfide bond. Gly9 bears the Glycine amide mark. Intrachain disulfides connect Cys22-Cys66, Cys25-Cys39, Cys33-Cys56, Cys40-Cys46, Cys73-Cys85, Cys79-Cys97, and Cys86-Cys91. Residue Asn117 is glycosylated (N-linked (GlcNAc...) asparagine).

The protein belongs to the vasopressin/oxytocin family. In terms of processing, seven disulfide bonds are present in neurophysin.

Its subcellular location is the secreted. In terms of biological role, vasotocin is an antidiuretic hormone. The protein is Vasotocin-neurophysin VT of Pelophylax lessonae (Pool frog).